The sequence spans 625 residues: Chaperone protein HtpG (625 aa).

Residues 1 to 339 (MNKQTLSFQA…SSDLPLNVSR (339 aa)) are a; substrate-binding. A b region spans residues 340-557 (ELLQESRDVK…DGDISGHLAR (218 aa)). The tract at residues 558–625 (LLKQAGQSAP…YVQRVNRLLV (68 aa)) is c.

It belongs to the heat shock protein 90 family. Homodimer.

It is found in the cytoplasm. Its function is as follows. Molecular chaperone. Has ATPase activity. This chain is Chaperone protein HtpG, found in Methylibium petroleiphilum (strain ATCC BAA-1232 / LMG 22953 / PM1).